Consider the following 406-residue polypeptide: Tryptophan synthase beta chain (406 aa).

Lys-99 is subject to N6-(pyridoxal phosphate)lysine.

It belongs to the TrpB family. As to quaternary structure, tetramer of two alpha and two beta chains. Pyridoxal 5'-phosphate serves as cofactor.

It catalyses the reaction (1S,2R)-1-C-(indol-3-yl)glycerol 3-phosphate + L-serine = D-glyceraldehyde 3-phosphate + L-tryptophan + H2O. The protein operates within amino-acid biosynthesis; L-tryptophan biosynthesis; L-tryptophan from chorismate: step 5/5. Functionally, the beta subunit is responsible for the synthesis of L-tryptophan from indole and L-serine. The polypeptide is Tryptophan synthase beta chain (Methylobacterium sp. (strain 4-46)).